Reading from the N-terminus, the 190-residue chain is Peptidoglycan recognition protein 1 (190 aa).

Residues 1-21 (MSRRYTPLAWVLLALLGLGAA) form the signal peptide. Position 22 is a pyrrolidone carboxylic acid (Q22). Disulfide bonds link C24-C148, C40-C85, and C61-C67. In terms of domain architecture, N-acetylmuramoyl-L-alanine amidase spans 46–174 (QPVRYVVVSH…RDVQQTLSPG (129 aa)).

The protein belongs to the N-acetylmuramoyl-L-alanine amidase 2 family. Homodimer; disulfide-linked. As to expression, synthesized only in bone marrow. The mature protein is stored in the cytoplasmic granules of eosinophils and neutrophils but is absent from monocytes, lymphocytes, or platelets.

It is found in the secreted. The protein localises to the cytoplasmic granule. In terms of biological role, innate immunity protein that plays several important functions in antimicrobial and antitumor defense systems. Acts as a pattern receptor that binds to murein peptidoglycans (PGN) of Gram-positive bacteria and thus provides bactericidal activity. Forms an equimolar complex with heat shock protein HSPA1A and induces programmed cell death through apoptosis and necroptosis in tumor cell lines by activating the TNFR1 receptor on the target cell membrane. In addition, acts in complex with the Ca(2+)-binding protein S100A4 as a chemoattractant able to induce lymphocyte movement. Mechanistically, this complex acts as a ligand of the chemotactic receptors CCR5 and CXCR3 which are present on the cells of the immune system. Also promotes the activation of lymphocytes that become able to kill virus-infected cells as well as tumor cells by modulating the spectrum of their target-cell specificity. Induction of cytotoxicity on monocyte surface requires interaction with TREM1 receptor. In Bos taurus (Bovine), this protein is Peptidoglycan recognition protein 1 (PGLYRP1).